Reading from the N-terminus, the 551-residue chain is Medium/long-chain-fatty-acid--CoA/3-oxocholest-4-en-26-oate--CoA ligase (551 aa).

Residues 172–180, Asp417, Arg432, and Lys523 contribute to the ATP site; that span reads TGGTTGFPK.

The protein belongs to the ATP-dependent AMP-binding enzyme family.

The enzyme catalyses a medium-chain fatty acid + ATP + CoA = a medium-chain fatty acyl-CoA + AMP + diphosphate. It catalyses the reaction a long-chain fatty acid + ATP + CoA = a long-chain fatty acyl-CoA + AMP + diphosphate. The catalysed reaction is (25S)-3-oxocholest-4-en-26-oate + ATP + CoA = (25S)-3-oxocholest-4-en-26-oyl-CoA + AMP + diphosphate. The protein operates within lipid metabolism; fatty acid biosynthesis. Its pathway is steroid metabolism; cholesterol metabolism. In terms of biological role, plays an essential role in degradation of the side chains of C-24 branched-chain sterols. Not essential for degradation of straight chain sterols such as cholesterol. Catalyzes the activation of medium/long-chain fatty acids as acyl-coenzyme A (acyl-CoA), which are then transferred to the multifunctional polyketide synthase (PKS) type III for further chain extension. May be involved in the degradation of cholesterol via the degradation of the side chains of C-24 branched-chain sterols. The protein is Medium/long-chain-fatty-acid--CoA/3-oxocholest-4-en-26-oate--CoA ligase of Mycolicibacterium smegmatis (strain ATCC 700084 / mc(2)155) (Mycobacterium smegmatis).